A 282-amino-acid polypeptide reads, in one-letter code: Putative hydrolase BceJ2315_61450 (282 aa).

Positions 124, 126, and 155 each coordinate Mg(2+).

It belongs to the FAH family. Mg(2+) is required as a cofactor.

The protein is Putative hydrolase BceJ2315_61450 of Burkholderia cenocepacia (strain ATCC BAA-245 / DSM 16553 / LMG 16656 / NCTC 13227 / J2315 / CF5610) (Burkholderia cepacia (strain J2315)).